The following is a 77-amino-acid chain: Conotoxin S6.11 (77 aa).

The signal sequence occupies residues 1–19 (MEKLTILLLVAAVLMSTQA). Positions 20-50 (LIQGGLDERQKAKSNFFSKRKSNAESWWEGE) are excised as a propeptide. 3 cysteine pairs are disulfide-bonded: Cys51-Cys65, Cys58-Cys69, and Cys64-Cys74.

It belongs to the conotoxin O2 superfamily. Expressed by the venom duct.

It localises to the secreted. This is Conotoxin S6.11 from Conus striatus (Striated cone).